The primary structure comprises 119 residues: Fluoride-specific ion channel FluC 2 (119 aa).

4 helical membrane passes run 1–21 (MITV…RYGI), 33–53 (FPYA…FIFS), 56–76 (FSPF…TTFS), and 93–113 (VFTL…FLGY). Residues Gly70 and Thr73 each coordinate Na(+).

The protein belongs to the fluoride channel Fluc/FEX (TC 1.A.43) family.

It is found in the cell membrane. It catalyses the reaction fluoride(in) = fluoride(out). Na(+) is not transported, but it plays an essential structural role and its presence is essential for fluoride channel function. Its function is as follows. Fluoride-specific ion channel. Important for reducing fluoride concentration in the cell, thus reducing its toxicity. The polypeptide is Fluoride-specific ion channel FluC 2 (Lactobacillus johnsonii (strain CNCM I-12250 / La1 / NCC 533)).